The chain runs to 563 residues: Nigrin b (563 aa).

Residues Met-1–Gly-25 form the signal peptide. Glu-188 is an active-site residue. N-linked (GlcNAc...) asparagine glycosylation occurs at Asn-221. Disulfide bonds link Cys-274–Cys-302, Cys-319–Cys-338, and Cys-360–Cys-377. 2 consecutive Ricin B-type lectin domains span residues Arg-305–Thr-431 and Val-434–Gln-559. A 1-alpha repeat occupies Asp-316 to Ser-356. The 1-beta repeat unit spans residues Met-357 to Asn-397. 2 N-linked (GlcNAc...) asparagine glycosylation sites follow: Asn-368 and Asn-376. The 1-gamma repeat unit spans residues Ser-400 to Asn-432. Residues Lys-445–Val-482 form a 2-alpha repeat. Cys-448 and Cys-463 are disulfide-bonded. Asn-483 is a glycosylation site (N-linked (GlcNAc...) asparagine). One copy of the 2-beta repeat lies at Arg-486–Asn-524. An intrachain disulfide couples Cys-489 to Cys-506. The stretch at Ser-527 to Gln-554 is one 2-gamma repeat. The N-linked (GlcNAc...) asparagine glycan is linked to Asn-537.

The protein in the N-terminal section; belongs to the ribosome-inactivating protein family. Type 2 RIP subfamily. In terms of assembly, disulfide-linked dimer of A and B chains.

It catalyses the reaction Endohydrolysis of the N-glycosidic bond at one specific adenosine on the 28S rRNA.. In terms of biological role, non-toxic type 2 RIP which strongly inhibits mammalian protein synthesis but does not affect plant nor bacterial protein synthesis. The A chain is responsible for inhibiting protein synthesis through the catalytic inactivation of 60S ribosomal subunits by removing adenine from position 4,324 of 28S rRNA. The B chain is a galactose-specific lectin that facilitates the binding of nigrin b to the cell membrane that precedes endocytosis. This is Nigrin b from Sambucus nigra (European elder).